The chain runs to 655 residues: p-hydroxybenzoic acid efflux pump subunit AaeB (655 aa).

Residues 1 to 12 lie on the Periplasmic side of the membrane; sequence MGIFSIANQHIR. Residues 13 to 33 traverse the membrane as a helical segment; it reads FAVKLATAIVLALFVGFHFQL. The Cytoplasmic portion of the chain corresponds to 34–37; sequence ETPR. The chain crosses the membrane as a helical span at residues 38 to 58; sequence WAVLTAAIVAAGPAFAAGGEP. The Periplasmic segment spans residues 59–68; the sequence is YSGAIRYRGF. Residues 69–89 form a helical membrane-spanning segment; that stretch reads LRIIGTFIGCIAGLVIIIAMI. At 90–92 the chain is on the cytoplasmic side; that stretch reads RAP. Residues 93–113 traverse the membrane as a helical segment; that stretch reads LLMILVCCIWAGFCTWISSLV. Residues 114-120 are Periplasmic-facing; the sequence is RIENSYA. A helical membrane pass occupies residues 121–141; the sequence is WGLAGYTALIIVITIQPEPLL. At 142–151 the chain is on the cytoplasmic side; sequence TPQFAVERCS. Residues 152–172 traverse the membrane as a helical segment; that stretch reads EIVIGIVCAIMADLLFSPRSI. Residues 173 to 369 are Periplasmic-facing; sequence KQEVDRELES…RTTLSCILGT (197 aa). Residues 370-390 traverse the membrane as a helical segment; sequence LFWLWTGWTSGSGAMVMIAVV. Residues 391-406 lie on the Cytoplasmic side of the membrane; sequence TSLAMRLPNPRMVAID. Residues 407-427 traverse the membrane as a helical segment; the sequence is FIYGTLAALPLGLLYFLVIIP. At 428–430 the chain is on the periplasmic side; the sequence is NTQ. A helical membrane pass occupies residues 431-451; it reads QSMLLLCISLAVLGFFLGIEV. At 452–458 the chain is on the cytoplasmic side; the sequence is QKRRLGS. Residues 459–479 traverse the membrane as a helical segment; sequence MGALASTINIIVLDNPMTFHF. Residues 480–481 lie on the Periplasmic side of the membrane; the sequence is SQ. Residues 482–502 form a helical membrane-spanning segment; the sequence is FLDSALGQIVGCVLAFTVILL. The Cytoplasmic segment spans residues 503–655; the sequence is VRDKSRDRTG…HKYQHALTDS (153 aa).

This sequence belongs to the aromatic acid exporter ArAE (TC 2.A.85) family.

The protein resides in the cell inner membrane. Its function is as follows. Forms an efflux pump with AaeA. Could function as a metabolic relief valve, allowing to eliminate certain compounds when they accumulate to high levels in the cell. This chain is p-hydroxybenzoic acid efflux pump subunit AaeB, found in Escherichia coli O6:H1 (strain CFT073 / ATCC 700928 / UPEC).